We begin with the raw amino-acid sequence, 637 residues long: tRNA uridine 5-carboxymethylaminomethyl modification enzyme MnmG (637 aa).

14-19 (GAGHAG) is an FAD binding site. 279–293 (GPRYCPSIEDKVVRF) contacts NAD(+).

The protein belongs to the MnmG family. In terms of assembly, homodimer. Heterotetramer of two MnmE and two MnmG subunits. It depends on FAD as a cofactor.

Its subcellular location is the cytoplasm. NAD-binding protein involved in the addition of a carboxymethylaminomethyl (cmnm) group at the wobble position (U34) of certain tRNAs, forming tRNA-cmnm(5)s(2)U34. In Desulfitobacterium hafniense (strain Y51), this protein is tRNA uridine 5-carboxymethylaminomethyl modification enzyme MnmG.